The sequence spans 259 residues: Flap endonuclease Xni (259 aa).

D109 is a binding site for Mg(2+). The 5'-3' exonuclease domain occupies 165–255 (VKPQQLSDYW…FNLQDLRFTA (91 aa)). K(+) is bound by residues L176, I187, and I190. The interval 189-194 (GIGPKA) is interaction with DNA.

The protein belongs to the Xni family. It depends on Mg(2+) as a cofactor. K(+) serves as cofactor.

Functionally, has flap endonuclease activity. During DNA replication, flap endonucleases cleave the 5'-overhanging flap structure that is generated by displacement synthesis when DNA polymerase encounters the 5'-end of a downstream Okazaki fragment. The chain is Flap endonuclease Xni from Vibrio vulnificus (strain YJ016).